The following is a 136-amino-acid chain: uncharacterized protein (136 aa).

Residues Phe-102–Val-118 traverse the membrane as a helical segment.

The protein resides in the membrane. This is an uncharacterized protein from Saccharomyces cerevisiae (strain ATCC 204508 / S288c) (Baker's yeast).